Reading from the N-terminus, the 88-residue chain is Cell division topological specificity factor (88 aa).

This sequence belongs to the MinE family.

Its function is as follows. Prevents the cell division inhibition by proteins MinC and MinD at internal division sites while permitting inhibition at polar sites. This ensures cell division at the proper site by restricting the formation of a division septum at the midpoint of the long axis of the cell. The polypeptide is Cell division topological specificity factor (Paracidovorax citrulli (strain AAC00-1) (Acidovorax citrulli)).